The sequence spans 388 residues: tRNA(Ile)-lysidine synthase (388 aa).

51-56 (SGGRDS) contributes to the ATP binding site.

The protein belongs to the tRNA(Ile)-lysidine synthase family.

Its subcellular location is the cytoplasm. It catalyses the reaction cytidine(34) in tRNA(Ile2) + L-lysine + ATP = lysidine(34) in tRNA(Ile2) + AMP + diphosphate + H(+). Functionally, ligates lysine onto the cytidine present at position 34 of the AUA codon-specific tRNA(Ile) that contains the anticodon CAU, in an ATP-dependent manner. Cytidine is converted to lysidine, thus changing the amino acid specificity of the tRNA from methionine to isoleucine. The sequence is that of tRNA(Ile)-lysidine synthase from Bifidobacterium longum (strain NCC 2705).